The primary structure comprises 132 residues: MADLDNSQDWLEALKWDADGMIPAIAQDENGRVVMFAYMNRDSLQETVLCGNAVYWSRSRKRLWRKGEESGHFQKVNSIRTDCDGDVLLLSIEQVGGIACHTGRESCFFNELNGDRWIPADPVLKDPKEIYK.

Asp-82 lines the Mg(2+) pocket. A Zn(2+)-binding site is contributed by Cys-83. Mg(2+)-binding residues include Asp-84 and Asp-86. Zn(2+)-binding residues include Cys-100 and Cys-107.

It belongs to the PRA-CH family. As to quaternary structure, homodimer. Mg(2+) is required as a cofactor. It depends on Zn(2+) as a cofactor.

It localises to the cytoplasm. The catalysed reaction is 1-(5-phospho-beta-D-ribosyl)-5'-AMP + H2O = 1-(5-phospho-beta-D-ribosyl)-5-[(5-phospho-beta-D-ribosylamino)methylideneamino]imidazole-4-carboxamide. It participates in amino-acid biosynthesis; L-histidine biosynthesis; L-histidine from 5-phospho-alpha-D-ribose 1-diphosphate: step 3/9. In terms of biological role, catalyzes the hydrolysis of the adenine ring of phosphoribosyl-AMP. The sequence is that of Phosphoribosyl-AMP cyclohydrolase from Dechloromonas aromatica (strain RCB).